Consider the following 395-residue polypeptide: Hdr-like menaquinol oxidoreductase integral membrane subunit (395 aa).

10 helical membrane-spanning segments follow: residues 15 to 35 (YFAL…AYVL), 57 to 77 (IPYF…AGVF), 88 to 108 (IAAY…ALDI), 126 to 146 (IFSW…IYLL), 158 to 178 (FMAG…GAIY), 196 to 216 (FIVC…YFTF), 231 to 251 (LALI…VEGL), 274 to 294 (VFWS…IIVL), 305 to 325 (ITFA…YLII), and 364 to 384 (IGLI…FALI).

Belongs to the NrfD family. As to quaternary structure, consists of five subunits: an integral membrane subunit, a cytochrome b-like subunit, a cytochrome c subunit and two iron-sulfur subunits.

Its subcellular location is the cell membrane. Its function is as follows. Has menaquinol-oxidizing activity. HmeB subunit may function as a menaquinol-oxidizing site. HmeA, HmeB and HmeE subunits may together catalyze electron transfer from menaquinol to cytochrome c. The polypeptide is Hdr-like menaquinol oxidoreductase integral membrane subunit (hmeB) (Archaeoglobus fulgidus (strain ATCC 49558 / DSM 4304 / JCM 9628 / NBRC 100126 / VC-16)).